A 401-amino-acid polypeptide reads, in one-letter code: Probable 2,3-bisphosphoglycerate-independent phosphoglycerate mutase (401 aa).

The protein belongs to the BPG-independent phosphoglycerate mutase family. A-PGAM subfamily.

It catalyses the reaction (2R)-2-phosphoglycerate = (2R)-3-phosphoglycerate. The protein operates within carbohydrate degradation; glycolysis; pyruvate from D-glyceraldehyde 3-phosphate: step 3/5. Functionally, catalyzes the interconversion of 2-phosphoglycerate and 3-phosphoglycerate. This Thermotoga sp. (strain RQ2) protein is Probable 2,3-bisphosphoglycerate-independent phosphoglycerate mutase.